A 69-amino-acid polypeptide reads, in one-letter code: DNA-directed RNA polymerase subunit epsilon (69 aa).

It belongs to the RNA polymerase subunit epsilon family. As to quaternary structure, RNAP is composed of a core of 2 alpha, a beta and a beta' subunit. The core is associated with a delta subunit, and at least one of epsilon or omega. When a sigma factor is associated with the core the holoenzyme is formed, which can initiate transcription.

It carries out the reaction RNA(n) + a ribonucleoside 5'-triphosphate = RNA(n+1) + diphosphate. In terms of biological role, a non-essential component of RNA polymerase (RNAP). The sequence is that of DNA-directed RNA polymerase subunit epsilon from Halalkalibacterium halodurans (strain ATCC BAA-125 / DSM 18197 / FERM 7344 / JCM 9153 / C-125) (Bacillus halodurans).